Here is a 117-residue protein sequence, read N- to C-terminus: Probable non-functional immunoglobulin heavy variable 7-81 (117 aa).

The first 19 residues, 1–19 (MDWTWSILFLVAAATGTYS), serve as a signal peptide directing secretion. The interval 20 to 44 (QVQLVQSGHEVKQPGASVKVSCKAS) is framework-1. The region spanning 20–117 (QVQLVQSGHE…EDMAMYYCAR (98 aa)) is the Ig-like domain. Cysteines 41 and 115 form a disulfide. The interval 45–52 (GYSFTTYG) is complementarity-determining-1. Residues 53-69 (MNWVPQAPGQGLEWMGW) form a framework-2 region. A complementarity-determining-2 region spans residues 70-77 (FNTYTGNP). Asn-76 is a glycosylation site (N-linked (GlcNAc...) asparagine). Residues 78–115 (TYAQGFTGRFVFSMDTSASTAYLQISSLKAEDMAMYYC) form a framework-3 region. The complementarity-determining-3 stretch occupies residues 116-117 (AR).

In terms of assembly, immunoglobulins are composed of two identical heavy chains and two identical light chains; disulfide-linked.

It is found in the secreted. The protein localises to the cell membrane. Functionally, probable non-functional open reading frame (ORF) of V region of the variable domain of immunoglobulin heavy chains. Non-functional ORF generally cannot participate in the synthesis of a productive immunoglobulin chain due to altered V-(D)-J or switch recombination and/or splicing site (at mRNA level) and/or conserved amino acid change (protein level). Immunoglobulins, also known as antibodies, are membrane-bound or secreted glycoproteins produced by B lymphocytes. In the recognition phase of humoral immunity, the membrane-bound immunoglobulins serve as receptors which, upon binding of a specific antigen, trigger the clonal expansion and differentiation of B lymphocytes into immunoglobulins-secreting plasma cells. Secreted immunoglobulins mediate the effector phase of humoral immunity, which results in the elimination of bound antigens. The antigen binding site is formed by the variable domain of one heavy chain, together with that of its associated light chain. Thus, each immunoglobulin has two antigen binding sites with remarkable affinity for a particular antigen. The variable domains are assembled by a process called V-(D)-J rearrangement and can then be subjected to somatic hypermutations which, after exposure to antigen and selection, allow affinity maturation for a particular antigen. The sequence is that of Probable non-functional immunoglobulin heavy variable 7-81 from Homo sapiens (Human).